The primary structure comprises 301 residues: MVQQQQQQQQIKKNQVKPPLYSNLIAGAIAGVIGSSVVFPLDFVKTRLQQQRVSIDGSKQYNGIIDCFKKVIKNEGGVRGLYRGLSSNLIGIIPEKALKLAMNDYFRTRFQGDRSYIKLWEEVASGGLAGMCQVVATNPMELVKIRMQVSGLSGKKASLKEVVSELGIKGLYKGTASTLLRDVPFSMIYFSIYGRMKHNLTDQETGEIGLPKILLCGITAGSIAASVSTPFDVIKTRIQVKPGPNDPHYKGIADCFRKTIQSEGPKALFKGVLPRVCIISPLFGITLVVYEIQKSFYASTH.

Residues 1–23 lie on the Mitochondrial intermembrane side of the membrane; it reads MVQQQQQQQQIKKNQVKPPLYSN. 3 Solcar repeats span residues 18–109, 117–199, and 208–296; these read PPLY…FRTR, IKLW…MKHN, and IGLP…QKSF. Residues 24–44 form a helical membrane-spanning segment; that stretch reads LIAGAIAGVIGSSVVFPLDFV. Topologically, residues 45–75 are mitochondrial matrix; the sequence is KTRLQQQRVSIDGSKQYNGIIDCFKKVIKNE. Residues 76–97 traverse the membrane as a helical segment; that stretch reads GGVRGLYRGLSSNLIGIIPEKA. The Mitochondrial intermembrane segment spans residues 98–122; the sequence is LKLAMNDYFRTRFQGDRSYIKLWEE. Residues 123-143 traverse the membrane as a helical segment; sequence VASGGLAGMCQVVATNPMELV. Topologically, residues 144 to 173 are mitochondrial matrix; sequence KIRMQVSGLSGKKASLKEVVSELGIKGLYK. A helical membrane pass occupies residues 174–194; sequence GTASTLLRDVPFSMIYFSIYG. Topologically, residues 195–207 are mitochondrial intermembrane; it reads RMKHNLTDQETGE. Residues 208–228 form a helical membrane-spanning segment; that stretch reads IGLPKILLCGITAGSIAASVS. The Mitochondrial matrix portion of the chain corresponds to 229–271; the sequence is TPFDVIKTRIQVKPGPNDPHYKGIADCFRKTIQSEGPKALFKG. A helical membrane pass occupies residues 272-292; it reads VLPRVCIISPLFGITLVVYEI. Residues 293–301 are Mitochondrial intermembrane-facing; the sequence is QKSFYASTH.

It belongs to the mitochondrial carrier (TC 2.A.29) family.

The protein localises to the mitochondrion inner membrane. In terms of biological role, mitochondrial solute carriers shuttle metabolites, nucleotides, and cofactors through the mitochondrial inner membrane. The sequence is that of Mitochondrial substrate carrier family protein X (mcfX) from Dictyostelium discoideum (Social amoeba).